Reading from the N-terminus, the 837-residue chain is Periplasmic nitrate reductase (837 aa).

Residues M1–A31 constitute a signal peptide (tat-type signal). The 57-residue stretch at I37 to D93 folds into the 4Fe-4S Mo/W bis-MGD-type domain. Residues C44, C47, C51, and C79 each contribute to the [4Fe-4S] cluster site. Mo-bis(molybdopterin guanine dinucleotide) contacts are provided by residues K81, Q148, N173, C177, W210–M217, S241–H245, and Q260–D262. A disordered region spans residues E308–K329. Residues A319 to K329 are compositionally biased toward basic and acidic residues. Mo-bis(molybdopterin guanine dinucleotide) is bound by residues M381, Q385, N491, S517–D518, K540, D567, and T727–T736. F803 lines the substrate pocket. N811 and K828 together coordinate Mo-bis(molybdopterin guanine dinucleotide).

This sequence belongs to the prokaryotic molybdopterin-containing oxidoreductase family. NasA/NapA/NarB subfamily. Component of the periplasmic nitrate reductase NapAB complex composed of NapA and NapB. The cofactor is [4Fe-4S] cluster. Mo-bis(molybdopterin guanine dinucleotide) serves as cofactor. In terms of processing, predicted to be exported by the Tat system. The position of the signal peptide cleavage has not been experimentally proven.

It is found in the periplasm. The enzyme catalyses 2 Fe(II)-[cytochrome] + nitrate + 2 H(+) = 2 Fe(III)-[cytochrome] + nitrite + H2O. Functionally, catalytic subunit of the periplasmic nitrate reductase complex NapAB. Receives electrons from NapB and catalyzes the reduction of nitrate to nitrite. The chain is Periplasmic nitrate reductase from Dechloromonas aromatica (strain RCB).